Here is a 422-residue protein sequence, read N- to C-terminus: Electron transfer flavoprotein subunit alpha (422 aa).

The segment at 61-80 (KRIDRSGTQQGAGGGKASAS) is disordered. FAD contacts are provided by residues 329–330 (SR), 343–347 (QVGAT), 360–367 (GISGAIQH), and Asn-381.

This sequence belongs to the ETF alpha-subunit/FixB family. As to quaternary structure, heterodimer of an alpha and a beta subunit. The cofactor is FAD.

In terms of biological role, participates in the electron transfer process during N,N-dimethylglycine (DMG) degradation to sarcosine. The chain is Electron transfer flavoprotein subunit alpha from Chromohalobacter salexigens (strain ATCC BAA-138 / DSM 3043 / CIP 106854 / NCIMB 13768 / 1H11).